The sequence spans 578 residues: MFRNRRILLYARRFFLVWICFLFITSWSLIQRHLKNWLVQAPDLKLSGSLQDTGIKVRDVRISKCYSWFSNCDAIWDYSLQDDLVTWYRIDMGKMQDTSIGQGFGWTSYVYWQPLYPNERGSAVVDLALSRNGLPLGLANERYNKIKNNDIDGYHVHSNTDNEFYVKDDSSNRFNPDMKWSAKFGNHLEDWFWRGDGIWCKYGRRSNGIKEIKAFIGEDFIESRPMWKEMVHCLHREGYSKPISISFQKSRLDDFTYGKEKDLSQISEPSLVMKRADFKILQISDLHFGRHIVSDSRKEKPDSIFRYDWPNVQFIHSVIRNERPDLAVITGHIFKDFNKNLDYESQILKMVSPIISNGIPFLFTWGEPQVTTEFKVNILNFIKSLPFCLNKFDLKNSTYLMLPLLLPAKTPGSQKQIGTIFAFDSNVTESYNFLDKFPRSPQSVYNLAFQHLPLHEYRPQGSFALIGNYEQKGSLDYIPHTKAFRNLLGEKDIKAISCGHEHGNDCCVLSDGKQQNLKNNMWLCYGGVTGYDQAYESKVRIFKIDTEKNDITSWKRSIKDTSKVSDYQYIWSRTLNTQ.

The N-terminal stretch at 1–28 (MFRNRRILLYARRFFLVWICFLFITSWS) is a signal peptide.

Its function is as follows. May be involved in the activation of the plasma membrane proton-ATPase by glucose. The polypeptide is Protein SIA1 (SIA1) (Kluyveromyces lactis (strain ATCC 8585 / CBS 2359 / DSM 70799 / NBRC 1267 / NRRL Y-1140 / WM37) (Yeast)).